The sequence spans 177 residues: ATP synthase subunit b (177 aa).

Residues 16–36 (HLLLANMIVTIVVFLLLLILL) traverse the membrane as a helical segment.

It belongs to the ATPase B chain family. In terms of assembly, F-type ATPases have 2 components, F(1) - the catalytic core - and F(0) - the membrane proton channel. F(1) has five subunits: alpha(3), beta(3), gamma(1), delta(1), epsilon(1). F(0) has three main subunits: a(1), b(2) and c(10-14). The alpha and beta chains form an alternating ring which encloses part of the gamma chain. F(1) is attached to F(0) by a central stalk formed by the gamma and epsilon chains, while a peripheral stalk is formed by the delta and b chains.

It is found in the cell membrane. Functionally, f(1)F(0) ATP synthase produces ATP from ADP in the presence of a proton or sodium gradient. F-type ATPases consist of two structural domains, F(1) containing the extramembraneous catalytic core and F(0) containing the membrane proton channel, linked together by a central stalk and a peripheral stalk. During catalysis, ATP synthesis in the catalytic domain of F(1) is coupled via a rotary mechanism of the central stalk subunits to proton translocation. Component of the F(0) channel, it forms part of the peripheral stalk, linking F(1) to F(0). This is ATP synthase subunit b from Exiguobacterium sibiricum (strain DSM 17290 / CCUG 55495 / CIP 109462 / JCM 13490 / 255-15).